A 294-amino-acid chain; its full sequence is Aspartate carbamoyltransferase catalytic subunit (294 aa).

Carbamoyl phosphate-binding residues include Arg49 and Thr50. Lys77 contacts L-aspartate. Residues Arg99, His127, and Gln130 each contribute to the carbamoyl phosphate site. L-aspartate-binding residues include Arg161 and Arg211. Residues Gly250 and Pro251 each coordinate carbamoyl phosphate.

It belongs to the aspartate/ornithine carbamoyltransferase superfamily. ATCase family. Heterododecamer (2C3:3R2) of six catalytic PyrB chains organized as two trimers (C3), and six regulatory PyrI chains organized as three dimers (R2).

The catalysed reaction is carbamoyl phosphate + L-aspartate = N-carbamoyl-L-aspartate + phosphate + H(+). The protein operates within pyrimidine metabolism; UMP biosynthesis via de novo pathway; (S)-dihydroorotate from bicarbonate: step 2/3. Functionally, catalyzes the condensation of carbamoyl phosphate and aspartate to form carbamoyl aspartate and inorganic phosphate, the committed step in the de novo pyrimidine nucleotide biosynthesis pathway. The chain is Aspartate carbamoyltransferase catalytic subunit from Sulfurovum sp. (strain NBC37-1).